Here is a 76-residue protein sequence, read N- to C-terminus: Accessory gland-specific peptide 57Dc (76 aa).

An N-terminal signal peptide occupies residues 1-20; it reads MHGTHFLILLLLCGVLGSNG.

Post-translationally, cAMP-dependent phosphorylation. Lumen fluid of male accessory glands, becomes seminal fluid.

Its subcellular location is the secreted. Functionally, transferred from male to female during mating and may affect egglaying and behavior after mating. In Drosophila melanogaster (Fruit fly), this protein is Accessory gland-specific peptide 57Dc (Mst57Dc).